A 427-amino-acid polypeptide reads, in one-letter code: MNQTRSKALFKEAAVLIPGGVNSPVRAGKAVGTTPLFIDRAQGAEIVDADGNVYIDYIGSWGPMILGHRHSAVMAAIETVLKRGLSFGASTDLEARLARMVADAVPSIEMVRMVNSGTEATMSAIRLARGITGRDGLVKFDGCYHGHADMLLVDAGSGVATQAIPGSPGVPADVVRHTISLPYNNTAALKDCLDRKGEQIACVIVEPVAGNMGMVEPDPGFLSALRKETEKHGCLLIFDEVMSGFRVAYGGAQARYRITPDITCLGKVIGGGMPVGAYGGSRQIMKHIAPEGNIYQAGTLSGNPVAMAAGIATLSELKKPGVYEALEARTRRLADGLARAAADAGVPVQAHAVGAMLGLFFADRPVTDFASAKTSDLSRFAAYYRAMLEKGIFLAPSQFEAIFVSTAHTDDHIDRTVNAAKAVFADL.

The residue at position 267 (K267) is an N6-(pyridoxal phosphate)lysine.

It belongs to the class-III pyridoxal-phosphate-dependent aminotransferase family. HemL subfamily. In terms of assembly, homodimer. Pyridoxal 5'-phosphate is required as a cofactor.

The protein localises to the cytoplasm. The enzyme catalyses (S)-4-amino-5-oxopentanoate = 5-aminolevulinate. The protein operates within porphyrin-containing compound metabolism; protoporphyrin-IX biosynthesis; 5-aminolevulinate from L-glutamyl-tRNA(Glu): step 2/2. This chain is Glutamate-1-semialdehyde 2,1-aminomutase, found in Desulfosudis oleivorans (strain DSM 6200 / JCM 39069 / Hxd3) (Desulfococcus oleovorans).